The chain runs to 305 residues: Nod factor export ATP-binding protein I (305 aa).

An ABC transporter domain is found at 8-237 (IDLVGVRKSF…HIGCNVIEIY (230 aa)). An ATP-binding site is contributed by 40-47 (GPNGAGKS).

It belongs to the ABC transporter superfamily. Lipooligosaccharide exporter (TC 3.A.1.102) family. In terms of assembly, the complex is composed of two ATP-binding proteins (NodI) and two transmembrane proteins (NodJ).

It is found in the cell inner membrane. In terms of biological role, part of the ABC transporter complex NodIJ involved in the export of the nodulation factors (Nod factors), the bacterial signal molecules that induce symbiosis and subsequent nodulation induction. Nod factors are LCO (lipo-chitin oligosaccharide), a modified beta-1,4-linked N-acetylglucosamine oligosaccharide. This subunit is responsible for energy coupling to the transport system. The chain is Nod factor export ATP-binding protein I from Bradyrhizobium sp. (strain SNU001).